The following is a 369-amino-acid chain: Probable trehalose-phosphate phosphatase I (369 aa).

This sequence belongs to the trehalose phosphatase family. Requires a divalent metal cation as cofactor.

The enzyme catalyses alpha,alpha-trehalose 6-phosphate + H2O = alpha,alpha-trehalose + phosphate. It functions in the pathway glycan biosynthesis; trehalose biosynthesis. Removes the phosphate from trehalose 6-phosphate to produce free trehalose. Trehalose accumulation in plant may improve abiotic stress tolerance. In Arabidopsis thaliana (Mouse-ear cress), this protein is Probable trehalose-phosphate phosphatase I (TPPI).